Here is a 239-residue protein sequence, read N- to C-terminus: Endonuclease V (239 aa).

Mg(2+)-binding residues include aspartate 48 and aspartate 116.

This sequence belongs to the endonuclease V family. It depends on Mg(2+) as a cofactor.

Its subcellular location is the cytoplasm. The catalysed reaction is Endonucleolytic cleavage at apurinic or apyrimidinic sites to products with a 5'-phosphate.. DNA repair enzyme involved in the repair of deaminated bases. Selectively cleaves double-stranded DNA at the second phosphodiester bond 3' to a deoxyinosine leaving behind the intact lesion on the nicked DNA. In Xanthomonas oryzae pv. oryzae (strain MAFF 311018), this protein is Endonuclease V.